The following is a 129-amino-acid chain: Fluoride-specific ion channel FluC (129 aa).

4 helical membrane passes run 6 to 26 (ILAIGSGGFIGAVLRAYFNGI), 35 to 55 (IPFGTLGVNLVGSFIMGILIA), 73 to 93 (TGVLGALTTYSTFAIESFLLL), and 98 to 118 (IALALANISLNAFGSILMAGG). Na(+)-binding residues include Gly-77 and Thr-80.

The protein belongs to the fluoride channel Fluc/FEX (TC 1.A.43) family.

The protein resides in the cell inner membrane. It catalyses the reaction fluoride(in) = fluoride(out). Na(+) is not transported, but it plays an essential structural role and its presence is essential for fluoride channel function. Its function is as follows. Fluoride-specific ion channel. Important for reducing fluoride concentration in the cell, thus reducing its toxicity. This chain is Fluoride-specific ion channel FluC, found in Sulfurimonas denitrificans (strain ATCC 33889 / DSM 1251) (Thiomicrospira denitrificans (strain ATCC 33889 / DSM 1251)).